Reading from the N-terminus, the 461-residue chain is Tubulin gamma-2 chain (461 aa).

Ala-142–Gly-148 lines the GTP pocket.

This sequence belongs to the tubulin family.

The protein localises to the cytoplasm. The protein resides in the cytoskeleton. It localises to the microtubule organizing center. Its subcellular location is the centrosome. In terms of biological role, tubulin is the major constituent of microtubules. The gamma chain is found at microtubule organizing centers (MTOC) such as the spindle poles or the centrosome, suggesting that it is involved in the minus-end nucleation of microtubule assembly. The polypeptide is Tubulin gamma-2 chain (Euplotoides octocarinatus (Freshwater ciliate)).